The sequence spans 169 residues: Putative phosphoesterase SAR0985 (169 aa).

Residue His34 is the Proton donor of the active site. Short sequence motifs (HXTX) lie at residues 34–37 and 115–118; these read HVTI and HFTI. The active-site Proton acceptor is His115.

It belongs to the 2H phosphoesterase superfamily. YjcG family.

This Staphylococcus aureus (strain MRSA252) protein is Putative phosphoesterase SAR0985.